Consider the following 794-residue polypeptide: Zinc finger protein 148 (794 aa).

Lysine 6 is covalently cross-linked (Glycyl lysine isopeptide (Lys-Gly) (interchain with G-Cter in SUMO2)). Serine 51 carries the phosphoserine modification. Residues lysine 88, lysine 115, and lysine 132 each participate in a glycyl lysine isopeptide (Lys-Gly) (interchain with G-Cter in SUMO2) cross-link. Residues 171-193 form a C2H2-type 1 zinc finger; sequence HVCEHCNAAFRTNYHLQRHVFIH. Residue threonine 194 is modified to Phosphothreonine. C2H2-type zinc fingers lie at residues 199–221 and 227–249; these read FQCSQCDMRFIQKYLLQRHEKIH and FRCDECGMRFIQKYHMERHKRTH. Serine 250 carries the post-translational modification Phosphoserine. A C2H2-type 4 zinc finger spans residues 255–278; the sequence is YQCEYCLQYFSRTDRVLKHKRMCH. Lysine 291 is covalently cross-linked (Glycyl lysine isopeptide (Lys-Gly) (interchain with G-Cter in SUMO2)). The interval 298 to 336 is disordered; it reads EEDSGFSTSPKDNSLPKKKRQKTEKKSSGMDKESALDKS. Serine 301 and serine 306 each carry phosphoserine. Lysine 308 participates in a covalent cross-link: Glycyl lysine isopeptide (Lys-Gly) (interchain with G-Cter in SUMO2). The segment covering 321–336 has biased composition (basic and acidic residues); it reads EKKSSGMDKESALDKS. Residue lysine 356 forms a Glycyl lysine isopeptide (Lys-Gly) (interchain with G-Cter in SUMO1); alternate linkage. Residue lysine 356 forms a Glycyl lysine isopeptide (Lys-Gly) (interchain with G-Cter in SUMO2); alternate linkage. A Glycyl lysine isopeptide (Lys-Gly) (interchain with G-Cter in SUMO2) cross-link involves residue lysine 402. Serine 412 is subject to Phosphoserine. Residues lysine 421 and lysine 424 each participate in a glycyl lysine isopeptide (Lys-Gly) (interchain with G-Cter in SUMO2) cross-link. The span at 574–588 shows a compositional bias: polar residues; the sequence is NSSEVPEVTPSENVG. Residues 574 to 599 are disordered; the sequence is NSSEVPEVTPSENVGSSSQASSSDKA. Position 607 is an N6-acetyllysine (lysine 607). Phosphoserine occurs at positions 665 and 784.

Belongs to the krueppel C2H2-type zinc-finger protein family. Interacts with HNRNPDL. Interacts with the 5FMC complex; the interaction requires association with CHTOP. Interacts with CAVIN1. Post-translationally, sumoylated with SUMO2. Desumoylated by SENP3, resulting in the stimulation of transcription of its target genes.

It localises to the nucleus. Involved in transcriptional regulation. Represses the transcription of a number of genes including gastrin, stromelysin and enolase. Binds to the G-rich box in the enhancer region of these genes. This Pongo abelii (Sumatran orangutan) protein is Zinc finger protein 148 (ZNF148).